The following is a 620-amino-acid chain: 1-deoxy-D-xylulose-5-phosphate synthase (620 aa).

Thiamine diphosphate contacts are provided by residues His-80 and 121–123 (GHS). Mg(2+) is bound at residue Asp-152. Residues 153 to 154 (GA), Asn-181, Tyr-288, and Glu-370 contribute to the thiamine diphosphate site. Asn-181 is a binding site for Mg(2+).

The protein belongs to the transketolase family. DXPS subfamily. As to quaternary structure, homodimer. Mg(2+) is required as a cofactor. The cofactor is thiamine diphosphate.

It carries out the reaction D-glyceraldehyde 3-phosphate + pyruvate + H(+) = 1-deoxy-D-xylulose 5-phosphate + CO2. It participates in metabolic intermediate biosynthesis; 1-deoxy-D-xylulose 5-phosphate biosynthesis; 1-deoxy-D-xylulose 5-phosphate from D-glyceraldehyde 3-phosphate and pyruvate: step 1/1. Its function is as follows. Catalyzes the acyloin condensation reaction between C atoms 2 and 3 of pyruvate and glyceraldehyde 3-phosphate to yield 1-deoxy-D-xylulose-5-phosphate (DXP). The polypeptide is 1-deoxy-D-xylulose-5-phosphate synthase (Escherichia fergusonii (strain ATCC 35469 / DSM 13698 / CCUG 18766 / IAM 14443 / JCM 21226 / LMG 7866 / NBRC 102419 / NCTC 12128 / CDC 0568-73)).